A 2359-amino-acid chain; its full sequence is Nonribosomal peptide synthetase anaPS (2359 aa).

The tract at residues 239 to 633 (RNATVHGDTL…VRRKDNQVKI (395 aa)) is adenylation 1. The 77-residue stretch at 770 to 846 (AAQGKGEEAI…ELASAANLSN (77 aa)) folds into the Carrier 1 domain. An O-(pantetheine 4'-phosphoryl)serine modification is found at Ser807. The tract at residues 883–1292 (EDIYPSTALQ…VGDLPRMSRQ (410 aa)) is condensation 1. An adenylation 2 region spans residues 1321–1709 (LEYPNACAVS…GRKDSQIKIR (389 aa)). The Carrier 2 domain maps to 1842–1918 (APSNSVEQDL…AIANKIGVVS (77 aa)). Ser1879 carries the post-translational modification O-(pantetheine 4'-phosphoryl)serine. A condensation 2 region spans residues 1936-2356 (LTPIQEFFFE…LVKCLEDLAS (421 aa)).

This sequence belongs to the NRP synthetase family.

It carries out the reaction anthranilate + L-tryptophan + 2 ATP = (R)-benzodiazepinedione + 2 AMP + 2 diphosphate + H(+). It participates in alkaloid biosynthesis. Functionally, nonribosomal peptide synthetase; part of the gene cluster that mediates the biosynthesis of the prenylated pyrroloindoline diketopiperazine acetylaszonalenin. The first step in the pathway is the formation of (R)-benzodiazepinedione by condensation of tryptophan and anthranilic acid catalyzed by the non-ribosomal peptide synthetase anaPS. The prenyltransferase anaPT then converts (R)-benzodiazepinedione to aszonalenin in the presence of dimethylallyl diphosphate (DMAPP) via C3-prenylation. The last step in the biosynthesis of acetylaszonalenin via acetylation of aszonalenin at position N1 catalyzed by anaAT. This Neosartorya fischeri (strain ATCC 1020 / DSM 3700 / CBS 544.65 / FGSC A1164 / JCM 1740 / NRRL 181 / WB 181) (Aspergillus fischerianus) protein is Nonribosomal peptide synthetase anaPS.